A 335-amino-acid polypeptide reads, in one-letter code: Luciferase-like monooxygenase (335 aa).

This sequence to bacterial alkanal monooxygenase alpha and beta chains.

This chain is Luciferase-like monooxygenase (yhbW), found in Escherichia coli O6:H1 (strain CFT073 / ATCC 700928 / UPEC).